We begin with the raw amino-acid sequence, 506 residues long: Deoxyguanosinetriphosphate triphosphohydrolase (506 aa).

The region spanning 66 to 274 (RLTHSLEVQQ…MEAADDISYC (209 aa)) is the HD domain.

Belongs to the dGTPase family. Type 1 subfamily. As to quaternary structure, homotetramer. Requires Mg(2+) as cofactor.

It carries out the reaction dGTP + H2O = 2'-deoxyguanosine + triphosphate + H(+). In terms of biological role, dGTPase preferentially hydrolyzes dGTP over the other canonical NTPs. The protein is Deoxyguanosinetriphosphate triphosphohydrolase of Yersinia pestis bv. Antiqua (strain Antiqua).